We begin with the raw amino-acid sequence, 360 residues long: Zinc finger protein ztf-2 (360 aa).

The segment at 19–41 (LSSPEKEHRRKRRRGEVANPSNT) is disordered. 3 consecutive C2H2-type zinc fingers follow at residues 87–109 (RTCSTCGYQGKWVSEMIRHKRVH), 115–138 (FKCRYCSRTSKWKADLIRHVAKTH), and 180–203 (YRCQLCSFEDERVSVLNSHVSHLH). The segment covering 248 to 260 (PLSPCRSESSSDS) has biased composition (low complexity). A disordered region spans residues 248 to 272 (PLSPCRSESSSDSGIQTDPEEEASI).

As to expression, expressed in pharyngeal epithelium/arcade, which connects the pharynx to the mouth.

Transcription factor. Represses gene expression, probably via binding to DNA consensus sequence 5'-[AT][CT]TTCC[AC][AG]-3' in promoter regions. May play a role in pharynx morphogenesis. The sequence is that of Zinc finger protein ztf-2 from Caenorhabditis elegans.